Reading from the N-terminus, the 446-residue chain is Phosphoglucosamine mutase (446 aa).

S102 functions as the Phosphoserine intermediate in the catalytic mechanism. Mg(2+) contacts are provided by S102, D239, D241, and D243. The residue at position 102 (S102) is a Phosphoserine.

Belongs to the phosphohexose mutase family. Mg(2+) is required as a cofactor. In terms of processing, activated by phosphorylation.

It carries out the reaction alpha-D-glucosamine 1-phosphate = D-glucosamine 6-phosphate. Its function is as follows. Catalyzes the conversion of glucosamine-6-phosphate to glucosamine-1-phosphate. The sequence is that of Phosphoglucosamine mutase from Solibacter usitatus (strain Ellin6076).